Consider the following 534-residue polypeptide: Endoglucanase 5 (534 aa).

The N-terminal stretch at 1–27 (MSDVSGRFVVAAAVVAVSLAMAAAAAA) is a signal peptide. Aspartate 82 functions as the Nucleophile in the catalytic mechanism. Residues histidine 432, aspartate 484, and glutamate 493 contribute to the active site. The tract at residues 515-534 (RRRGEDAPPSSTSPVAEDDL) is disordered.

The protein belongs to the glycosyl hydrolase 9 (cellulase E) family.

The protein localises to the secreted. It catalyses the reaction Endohydrolysis of (1-&gt;4)-beta-D-glucosidic linkages in cellulose, lichenin and cereal beta-D-glucans.. This is Endoglucanase 5 from Oryza sativa subsp. japonica (Rice).